The primary structure comprises 309 residues: Porphobilinogen deaminase (309 aa).

An S-(dipyrrolylmethanemethyl)cysteine modification is found at Cys244.

The protein belongs to the HMBS family. As to quaternary structure, monomer. The cofactor is dipyrromethane.

It carries out the reaction 4 porphobilinogen + H2O = hydroxymethylbilane + 4 NH4(+). It participates in porphyrin-containing compound metabolism; protoporphyrin-IX biosynthesis; coproporphyrinogen-III from 5-aminolevulinate: step 2/4. Functionally, tetrapolymerization of the monopyrrole PBG into the hydroxymethylbilane pre-uroporphyrinogen in several discrete steps. The chain is Porphobilinogen deaminase from Listeria innocua serovar 6a (strain ATCC BAA-680 / CLIP 11262).